Here is a 369-residue protein sequence, read N- to C-terminus: Leucine-specific-binding protein (369 aa).

The first 23 residues, 1 to 23 (MKRKAKTIIAGIVALAVSQGAMA), serve as a signal peptide directing secretion. A disulfide bond links Cys76 and Cys101.

Belongs to the leucine-binding protein family.

The protein localises to the periplasm. Functionally, this protein is a component of the leucine-specific transport system, which is one of the two periplasmic binding protein-dependent transport systems of the high-affinity transport of the branched-chain amino acids. This Salmonella typhi protein is Leucine-specific-binding protein (livK).